We begin with the raw amino-acid sequence, 71 residues long: Large ribosomal subunit protein bL28 (71 aa).

The protein belongs to the bacterial ribosomal protein bL28 family.

The polypeptide is Large ribosomal subunit protein bL28 (Rubrobacter xylanophilus (strain DSM 9941 / JCM 11954 / NBRC 16129 / PRD-1)).